Here is a 296-residue protein sequence, read N- to C-terminus: Aldo-keto reductase MYCFIDRAFT_156381 (296 aa).

NADP(+) is bound at residue D14. Y19 acts as the Proton donor in catalysis. H83 is a binding site for substrate. NADP(+)-binding positions include 113–114 (CN), Q139, 168–178 (SPLAGGMLTDR), and R191. Y201 contributes to the substrate binding site. 255 to 263 (SSAEQLESN) provides a ligand contact to NADP(+).

This sequence belongs to the aldo/keto reductase family. Aldo/keto reductase 2 subfamily.

Its pathway is secondary metabolite biosynthesis. Its function is as follows. Aldo-keto reductase; part of the gene cluster that mediates the biosynthesis of an emodin derivative that may be involved in black Sigatoka disease of banana. The pathway begins with the synthesis of atrochrysone thioester by the polyketide synthase PKS8-1. The atrochrysone carboxyl ACP thioesterase MYCFIDRAFT_190111 then breaks the thioester bond and releases the atrochrysone carboxylic acid from PKS8-1. The decarboxylase MYCFIDRAFT_34057 then catalyzes the concerted decarboxylation-elimination required to convert atochrysone carboxylic acid into emodin anthrone, which is further oxidized to emodin by the anthrone oxygenase MYCFIDRAFT_34418. The functions of the other tailoring enzymes as well as the final product of the cluster have still to be identified. The chain is Aldo-keto reductase MYCFIDRAFT_156381 from Pseudocercospora fijiensis (strain CIRAD86) (Black leaf streak disease fungus).